Here is a 104-residue protein sequence, read N- to C-terminus: Large ribosomal subunit protein bL21 (104 aa).

It belongs to the bacterial ribosomal protein bL21 family. In terms of assembly, part of the 50S ribosomal subunit. Contacts protein L20.

Functionally, this protein binds to 23S rRNA in the presence of protein L20. The protein is Large ribosomal subunit protein bL21 of Salinispora tropica (strain ATCC BAA-916 / DSM 44818 / JCM 13857 / NBRC 105044 / CNB-440).